Reading from the N-terminus, the 166-residue chain is Transcriptional repressor NrdR (166 aa).

A zinc finger spans residues 3-34; that stretch reads CPFCHFVETDVIDTRKLYEGEVIRRRRRCRAC. An ATP-cone domain is found at 49 to 139; that stretch reads LMVVKKDGTR…VYRAFTDIGK (91 aa).

It belongs to the NrdR family. Requires Zn(2+) as cofactor.

In terms of biological role, negatively regulates transcription of bacterial ribonucleotide reductase nrd genes and operons by binding to NrdR-boxes. This chain is Transcriptional repressor NrdR, found in Chloroflexus aurantiacus (strain ATCC 29364 / DSM 637 / Y-400-fl).